We begin with the raw amino-acid sequence, 435 residues long: Xylose isomerase (435 aa).

Residues H99 and D102 contribute to the active site. The Mg(2+) site is built by E230, E266, H269, D294, D305, D307, and D337.

Belongs to the xylose isomerase family. Homotetramer. Mg(2+) serves as cofactor.

The protein localises to the cytoplasm. It carries out the reaction alpha-D-xylose = alpha-D-xylulofuranose. The sequence is that of Xylose isomerase (xylA) from Tetragenococcus halophilus (Pediococcus halophilus).